A 167-amino-acid polypeptide reads, in one-letter code: Interferon gamma (167 aa).

The first 23 residues, 1–23, serve as a signal peptide directing secretion; the sequence is MSYTSYILAFQLCLILGSYGCYC. Gln-24 bears the Pyrrolidone carboxylic acid mark. 3 N-linked (GlcNAc...) asparagine glycosylation sites follow: Asn-41, Asn-108, and Asn-117.

Belongs to the type II (or gamma) interferon family. As to quaternary structure, homodimer. Interacts with IFNGR1 (via extracellular domain); this interaction promotes IFNGR1 dimerization. Released primarily from activated T lymphocytes.

The protein resides in the secreted. Type II interferon produced by immune cells such as T-cells and NK cells that plays crucial roles in antimicrobial, antiviral, and antitumor responses by activating effector immune cells and enhancing antigen presentation. Primarily signals through the JAK-STAT pathway after interaction with its receptor IFNGR1 to affect gene regulation. Upon IFNG binding, IFNGR1 intracellular domain opens out to allow association of downstream signaling components JAK2, JAK1 and STAT1, leading to STAT1 activation, nuclear translocation and transcription of IFNG-regulated genes. Many of the induced genes are transcription factors such as IRF1 that are able to further drive regulation of a next wave of transcription. Plays a role in class I antigen presentation pathway by inducing a replacement of catalytic proteasome subunits with immunoproteasome subunits. In turn, increases the quantity, quality, and repertoire of peptides for class I MHC loading. Increases the efficiency of peptide generation also by inducing the expression of activator PA28 that associates with the proteasome and alters its proteolytic cleavage preference. Up-regulates as well MHC II complexes on the cell surface by promoting expression of several key molecules such as cathepsins B/CTSB, H/CTSH, and L/CTSL. Participates in the regulation of hematopoietic stem cells during development and under homeostatic conditions by affecting their development, quiescence, and differentiation. The sequence is that of Interferon gamma (IFNG) from Oryctolagus cuniculus (Rabbit).